The sequence spans 442 residues: UDP-N-acetylglucosamine 1-carboxyvinyltransferase (442 aa).

A phosphoenolpyruvate-binding site is contributed by 22-23 (KN). Residue Arg-94 coordinates UDP-N-acetyl-alpha-D-glucosamine. Catalysis depends on Asp-119, which acts as the Proton donor. UDP-N-acetyl-alpha-D-glucosamine-binding residues include Asp-309 and Val-331.

It belongs to the EPSP synthase family. MurA subfamily.

The protein resides in the cytoplasm. It catalyses the reaction phosphoenolpyruvate + UDP-N-acetyl-alpha-D-glucosamine = UDP-N-acetyl-3-O-(1-carboxyvinyl)-alpha-D-glucosamine + phosphate. The protein operates within cell wall biogenesis; peptidoglycan biosynthesis. Its function is as follows. Cell wall formation. Adds enolpyruvyl to UDP-N-acetylglucosamine. This chain is UDP-N-acetylglucosamine 1-carboxyvinyltransferase, found in Chlamydia muridarum (strain MoPn / Nigg).